A 327-amino-acid chain; its full sequence is Short chain isoprenyl diphosphate synthase (327 aa).

Isopentenyl diphosphate contacts are provided by K48, R51, and H80. Mg(2+) contacts are provided by D87 and D91. R96 contacts an all-trans-polyprenyl diphosphate. An isopentenyl diphosphate-binding site is contributed by R97. An all-trans-polyprenyl diphosphate-binding residues include K176, T177, Q214, K231, and K241.

The protein belongs to the FPP/GGPP synthase family. In terms of assembly, homodimer. The cofactor is Mg(2+).

Its subcellular location is the cytoplasm. This chain is Short chain isoprenyl diphosphate synthase (idsA), found in Methanocaldococcus jannaschii (strain ATCC 43067 / DSM 2661 / JAL-1 / JCM 10045 / NBRC 100440) (Methanococcus jannaschii).